The chain runs to 147 residues: Large ribosomal subunit protein uL15 (147 aa).

Positions 1–20 (MTLRLNDLKPADGARTERTR) are enriched in basic and acidic residues. The interval 1–61 (MTLRLNDLKP…GFEGGQTPMQ (61 aa)) is disordered. Positions 23-33 (RGIGSGLGKTA) are enriched in gly residues. Positions 34–47 (GRGHKGSFARKGGG) are enriched in basic residues.

The protein belongs to the universal ribosomal protein uL15 family. Part of the 50S ribosomal subunit.

Its function is as follows. Binds to the 23S rRNA. The polypeptide is Large ribosomal subunit protein uL15 (Xanthomonas axonopodis pv. citri (strain 306)).